A 993-amino-acid polypeptide reads, in one-letter code: Chromosome transmission fidelity protein 18 homolog (993 aa).

Residues 26–72 (PDEFNAYDGPSTSKQAAEKQKENRAPVAALRDSTRLGNSTLGSPQLS) are disordered. Residues 60-72 (RLGNSTLGSPQLS) are compositionally biased toward polar residues. 427 to 434 (GPPGLGKT) contacts ATP. The tract at residues 892-913 (AAPKGGAPSAPAAKKKTSGAAA) is disordered. The segment covering 894–913 (PKGGAPSAPAAKKKTSGAAA) has biased composition (low complexity).

The protein belongs to the activator 1 small subunits family. CTF18 subfamily. Component of the CTF18-RFC complex.

It localises to the nucleus. Functionally, chromosome cohesion factor involved in sister chromatid cohesion and fidelity of chromosome transmission. Component of one of the cell nuclear antigen loader complexes, CTF18-replication factor C (CTF18-RFC). The CTF18-RFC complex catalyzes the ATP-dependent loading of PCNA onto primed and gapped DNA and has weak ATPase activity. The CTF18-RFC complex catalyzes the ATP-dependent loading of PCNA onto primed and gapped DNA. This Drosophila melanogaster (Fruit fly) protein is Chromosome transmission fidelity protein 18 homolog.